The following is a 183-amino-acid chain: Ribulose bisphosphate carboxylase small subunit, chloroplastic 5 (183 aa).

The transit peptide at 1–42 directs the protein to the chloroplast; it reads MAAAMMNKSVLLNKQCGKPAAVPKVVMSKGGFARTSAVNKNR.

Belongs to the RuBisCO small chain family. In terms of assembly, heterohexadecamer of 8 large and 8 small subunits.

It localises to the plastid. It is found in the chloroplast. RuBisCO catalyzes two reactions: the carboxylation of D-ribulose 1,5-bisphosphate, the primary event in carbon dioxide fixation, as well as the oxidative fragmentation of the pentose substrate. Both reactions occur simultaneously and in competition at the same active site. Although the small subunit is not catalytic it is essential for maximal activity. This chain is Ribulose bisphosphate carboxylase small subunit, chloroplastic 5, found in Acetabularia acetabulum (Mermaid's wine glass).